The primary structure comprises 136 residues: MVKILKPGKVALVTRGRFAGKKVVILQNVDQGSKSHPFGHAVVAGVERYPLKVTKSMGAKRIAKRSRVKPFIKVINYNHLMPTRYALELDNLKGLVTPTTFSEPSQRSAAKKTVKNTFEEKYQTGKSAWFFTPLRF.

Belongs to the eukaryotic ribosomal protein eL27 family. In terms of assembly, component of the large ribosomal subunit (LSU). Mature yeast ribosomes consist of a small (40S) and a large (60S) subunit. The 40S small subunit contains 1 molecule of ribosomal RNA (18S rRNA) and at least 33 different proteins. The large 60S subunit contains 3 rRNA molecules (25S, 5.8S and 5S rRNA) and at least 46 different proteins.

It is found in the cytoplasm. In terms of biological role, component of the ribosome, a large ribonucleoprotein complex responsible for the synthesis of proteins in the cell. The small ribosomal subunit (SSU) binds messenger RNAs (mRNAs) and translates the encoded message by selecting cognate aminoacyl-transfer RNA (tRNA) molecules. The large subunit (LSU) contains the ribosomal catalytic site termed the peptidyl transferase center (PTC), which catalyzes the formation of peptide bonds, thereby polymerizing the amino acids delivered by tRNAs into a polypeptide chain. The nascent polypeptides leave the ribosome through a tunnel in the LSU and interact with protein factors that function in enzymatic processing, targeting, and the membrane insertion of nascent chains at the exit of the ribosomal tunnel. In Schizosaccharomyces pombe (strain 972 / ATCC 24843) (Fission yeast), this protein is Large ribosomal subunit protein eL27B (rpl2702).